The sequence spans 511 residues: Type 2 DNA topoisomerase 6 subunit B-like (511 aa).

A disordered region spans residues 398–485 (DSAQGTEDAP…RALAPGRASL (88 aa)). A compositionally biased stretch (polar residues) spans 408–422 (DNSSLELLADTSGQA). The span at 440–451 (LRSARAPSPSEA) shows a compositional bias: low complexity. Over residues 466–475 (RGREHREAHG) the composition is skewed to basic and acidic residues.

The protein belongs to the TOP6B-like family. As to quaternary structure, heterotetramer of SPO11 and 2 TOP6BL chains. Interacts with SPO11. In terms of tissue distribution, detected in lung, spleen,colon and in skeletal muscle. Expressed in the ovaries, Fallopian tubes and uterus.

It localises to the chromosome. Functionally, component of a topoisomerase 6 complex specifically required for meiotic recombination. Together with SPO11, mediates DNA cleavage that forms the double-strand breaks (DSB) that initiate meiotic recombination. The complex promotes relaxation of negative and positive supercoiled DNA and DNA decatenation through cleavage and ligation cycles. In Homo sapiens (Human), this protein is Type 2 DNA topoisomerase 6 subunit B-like.